The chain runs to 142 residues: Hemoglobin subunit alpha (142 aa).

The residue at position 1 (Ser-1) is an N-acetylserine. The Globin domain occupies Ser-1–Arg-142. Residue His-59 coordinates O2. Residue His-88 coordinates heme b.

Belongs to the globin family. As to quaternary structure, heterotetramer of two alpha chains and two beta chains. Red blood cells.

Involved in oxygen transport from gills to the various peripheral tissues. The sequence is that of Hemoglobin subunit alpha (hba) from Electrophorus electricus (Electric eel).